A 160-amino-acid polypeptide reads, in one-letter code: SsrA-binding protein (160 aa).

Residues 133–160 are disordered; that stretch reads KKEHDKREDLKEREWQRDKERMMKNKGR.

It belongs to the SmpB family.

It localises to the cytoplasm. Required for rescue of stalled ribosomes mediated by trans-translation. Binds to transfer-messenger RNA (tmRNA), required for stable association of tmRNA with ribosomes. tmRNA and SmpB together mimic tRNA shape, replacing the anticodon stem-loop with SmpB. tmRNA is encoded by the ssrA gene; the 2 termini fold to resemble tRNA(Ala) and it encodes a 'tag peptide', a short internal open reading frame. During trans-translation Ala-aminoacylated tmRNA acts like a tRNA, entering the A-site of stalled ribosomes, displacing the stalled mRNA. The ribosome then switches to translate the ORF on the tmRNA; the nascent peptide is terminated with the 'tag peptide' encoded by the tmRNA and targeted for degradation. The ribosome is freed to recommence translation, which seems to be the essential function of trans-translation. This Tolumonas auensis (strain DSM 9187 / NBRC 110442 / TA 4) protein is SsrA-binding protein.